The sequence spans 275 residues: NADPH-dependent 7-cyano-7-deazaguanine reductase (275 aa).

81–83 (IES) provides a ligand contact to substrate. Position 83–84 (83–84 (SK)) interacts with NADPH. Cysteine 181 (thioimide intermediate) is an active-site residue. Residue aspartate 188 is the Proton donor of the active site. Position 220-221 (220-221 (HE)) interacts with substrate. 249 to 250 (RG) is an NADPH binding site.

Belongs to the GTP cyclohydrolase I family. QueF type 2 subfamily. As to quaternary structure, homodimer.

It localises to the cytoplasm. The enzyme catalyses 7-aminomethyl-7-carbaguanine + 2 NADP(+) = 7-cyano-7-deazaguanine + 2 NADPH + 3 H(+). The protein operates within tRNA modification; tRNA-queuosine biosynthesis. In terms of biological role, catalyzes the NADPH-dependent reduction of 7-cyano-7-deazaguanine (preQ0) to 7-aminomethyl-7-deazaguanine (preQ1). In Xylella fastidiosa (strain M23), this protein is NADPH-dependent 7-cyano-7-deazaguanine reductase.